A 509-amino-acid chain; its full sequence is Ribonuclease Y (509 aa).

The chain crosses the membrane as a helical span at residues 3-23 (IIFSSIFAGFILGFLIRVFLG). The 61-residue stretch at 197 to 257 (TVASVELPND…IRKELAKRTL (61 aa)) folds into the KH domain. One can recognise an HD domain in the interval 323–418 (VLSHSKETAI…VQIADAISAS (96 aa)).

The protein belongs to the RNase Y family.

It localises to the cell membrane. Functionally, endoribonuclease that initiates mRNA decay. The polypeptide is Ribonuclease Y (Borreliella afzelii (strain PKo) (Borrelia afzelii)).